Reading from the N-terminus, the 564-residue chain is Esterase FE4 (564 aa).

The first 23 residues, 1–23 (MKNTCGILLNLFLFIGCFLTCSA), serve as a signal peptide directing secretion. An N-linked (GlcNAc...) asparagine glycan is attached at Asn81. Residues Cys89 and Cys106 are joined by a disulfide bond. Catalysis depends on Ser214, which acts as the Acyl-ester intermediate. A disulfide bond links Cys266 and Cys277. N-linked (GlcNAc...) asparagine glycosylation is present at Asn269. Glu339 serves as the catalytic Charge relay system. N-linked (GlcNAc...) asparagine glycosylation is found at Asn371, Asn404, and Asn443. His463 (charge relay system) is an active-site residue.

It belongs to the type-B carboxylesterase/lipase family.

The enzyme catalyses a carboxylic ester + H2O = an alcohol + a carboxylate + H(+). Overproduction of nonspecific esterases is a common mechanism of resistance to organophosphate insecticides. This chain is Esterase FE4, found in Myzus persicae (Green peach aphid).